Here is a 380-residue protein sequence, read N- to C-terminus: Cytochrome b (380 aa).

4 helical membrane passes run 33-53 (FGSL…FLAM), 77-98 (WLIR…YLHI), 113-133 (WNVG…GYVL), and 178-198 (FFAF…IHLL). 2 residues coordinate heme b: His83 and His97. Residues His182 and His196 each coordinate heme b. His201 is a binding site for a ubiquinone. Helical transmembrane passes span 226 to 246 (YKDL…ALFS), 288 to 308 (LGGV…PALH), 320 to 340 (ITQL…WIGG), and 347 to 367 (FIII…TLIP).

The protein belongs to the cytochrome b family. In terms of assembly, the cytochrome bc1 complex contains 3 respiratory subunits (MT-CYB, CYC1 and UQCRFS1), 2 core proteins (UQCRC1 and UQCRC2) and probably 6 low-molecular weight proteins. Heme b serves as cofactor.

The protein resides in the mitochondrion inner membrane. Functionally, component of the ubiquinol-cytochrome c reductase complex (complex III or cytochrome b-c1 complex) that is part of the mitochondrial respiratory chain. The b-c1 complex mediates electron transfer from ubiquinol to cytochrome c. Contributes to the generation of a proton gradient across the mitochondrial membrane that is then used for ATP synthesis. The chain is Cytochrome b (mt-cyb) from Percopsis transmontana (Sand roller).